We begin with the raw amino-acid sequence, 158 residues long: Endoribonuclease YbeY (158 aa).

Zn(2+)-binding residues include histidine 117, histidine 121, and histidine 127.

Belongs to the endoribonuclease YbeY family. Zn(2+) is required as a cofactor.

It localises to the cytoplasm. Functionally, single strand-specific metallo-endoribonuclease involved in late-stage 70S ribosome quality control and in maturation of the 3' terminus of the 16S rRNA. The chain is Endoribonuclease YbeY from Psychromonas ingrahamii (strain DSM 17664 / CCUG 51855 / 37).